The sequence spans 307 residues: Serine/threonine-protein phosphatase 4 catalytic subunit (307 aa).

Mn(2+)-binding residues include D54, H56, D82, and N114. H115 acts as the Proton donor in catalysis. Positions 164 and 238 each coordinate Mn(2+). L307 carries the post-translational modification Leucine methyl ester.

This sequence belongs to the PPP phosphatase family. PP-4 (PP-X) subfamily. Serine/threonine-protein phosphatase 4 (PP4) occurs in different assemblies of the catalytic and one or more regulatory subunits. Probably part of a PP4 PPP4C-PPP4R2-PPP4R3 complex containing Pp4-19C, PPP4R2r and flfl. Interacts with Ptpa; thereby mediating basal localization of the Miranda (Mira) complex; probably by dephosphorylation of Mira. Requires Mn(2+) as cofactor. Post-translationally, reversibly methyl esterified on Leu-307 by leucine carboxyl methyltransferase 1 (LCMT1) and protein phosphatase methylesterase 1 (PPME1). Carboxyl methylation influences the affinity of the catalytic subunit for the different regulatory subunits, thereby modulating the PP2A holoenzyme's substrate specificity, enzyme activity and cellular localization.

Its subcellular location is the cytoplasm. It localises to the nucleus. It is found in the cytoskeleton. The protein localises to the microtubule organizing center. The protein resides in the centrosome. It carries out the reaction O-phospho-L-seryl-[protein] + H2O = L-seryl-[protein] + phosphate. The catalysed reaction is O-phospho-L-threonyl-[protein] + H2O = L-threonyl-[protein] + phosphate. In terms of biological role, protein phosphatase that regulates many processes such as microtubule organization at centrosomes. The probable PP4 complex Pp4-19C-PPP4R2r-flfl (PPP4C-PPP4R2-PPP4R3) is required to prevent caspase-induced cell death (in vitro). The protein is Serine/threonine-protein phosphatase 4 catalytic subunit (Pp4-19C) of Drosophila melanogaster (Fruit fly).